Here is a 712-residue protein sequence, read N- to C-terminus: Dynamin-1-like protein drp-1 (712 aa).

Residues 24 to 304 enclose the Dynamin-type G domain; sequence QIQLPQIVVV…LMHHIRNCLP (281 aa). The tract at residues 34–41 is G1 motif; it reads GSQSAGKS. A G2 motif region spans residues 60–62; sequence VTR. Residues 148-151 are G3 motif; sequence DLPG. The tract at residues 217-220 is G4 motif; the sequence is TKLD. Residues 247 to 250 are G5 motif; the sequence is VNRS. The tract at residues 280 to 502 is interaction with caspase ced-9; the sequence is SRNGTPYLAK…LAYINTKHPE (223 aa). Residues 523 to 542 are disordered; the sequence is GRSRNRHASTGERAVSAHGE. Residues 620–711 enclose the GED domain; that stretch reads VAIIERLIRN…IISEVRETQV (92 aa).

Belongs to the TRAFAC class dynamin-like GTPase superfamily. Dynamin/Fzo/YdjA family. Interacts (via residues 280-502) with caspase ced-9; the interaction is enhanced by GTP rather than GDP; the interaction is probably direct and may occur at the mitochondrion. As to expression, highly expressed in neurons, in intestinal cells and in the body wall, pharyngeal, and vulval muscles.

Its subcellular location is the mitochondrion. It localises to the mitochondrion outer membrane. It is found in the cytoplasm. The protein resides in the cytosol. The enzyme catalyses GTP + H2O = GDP + phosphate + H(+). With respect to regulation, GTPase activity is increased by binding to phospholipid membranes. Functions in mitochondrial division. Functions in peroxisomal division. Mediates membrane fission, perhaps mainly of the mitochondrial outer membrane. Mitochondrial fission may be promoted by recruitment to mitochondrial membranes via the egl-1/ced-9 complex. Involved in the coordination of mitochondrial division with autophagy in response to acute heat stress during larval development. Plays a role in apoptosis by promoting mitochondrial elimination and cell-death execution, acting downstream of caspase ced-3, and perhaps independently of FIS1-related protein fis-2, caspase ced-9 and apoptosis-inducing factor AIFM/wah-1. Role in promoting apoptosis dependent upon cleavage of drp-1 by ced-3. Involved in negatively modulating longevity in concert with the Insulin/IGF-1-like signaling (IIS) mediated pathway. This Caenorhabditis elegans protein is Dynamin-1-like protein drp-1.